A 247-amino-acid chain; its full sequence is Mitochondrial inner membrane protease ATP23 (247 aa).

Positions 1 to 21 (MSVPPPPKEDLIKPNPPKSES) are disordered. H144 is an a divalent metal cation binding site. E145 is a catalytic residue. H148 contacts a divalent metal cation.

Belongs to the peptidase M76 family.

It localises to the mitochondrion inner membrane. Functionally, has a dual role in the assembly of mitochondrial ATPase. Acts as a protease that removes N-terminal residues of mitochondrial ATPase CF(0) subunit 6 at the intermembrane space side. Also involved in the correct assembly of the membrane-embedded ATPase CF(0) particle, probably mediating association of subunit 6 with the subunit 9 ring. The sequence is that of Mitochondrial inner membrane protease ATP23 (ATP23) from Kluyveromyces lactis (strain ATCC 8585 / CBS 2359 / DSM 70799 / NBRC 1267 / NRRL Y-1140 / WM37) (Yeast).